A 469-amino-acid polypeptide reads, in one-letter code: Tubulin gamma-2 chain (469 aa).

142–148 (AGGTGSG) provides a ligand contact to GTP.

Belongs to the tubulin family.

Its subcellular location is the cytoplasm. The protein resides in the cytoskeleton. It is found in the microtubule organizing center. In terms of biological role, tubulin is the major constituent of microtubules. The gamma chain is found at microtubule organizing centers (MTOC) such as the spindle poles, suggesting that it is involved in the minus-end nucleation of microtubule assembly. This chain is Tubulin gamma-2 chain (TUBG2), found in Zea mays (Maize).